Here is a 443-residue protein sequence, read N- to C-terminus: Probable nitrate/nitrite antiporter NarK1 (443 aa).

12 helical membrane-spanning segments follow: residues 23-43 (TLAF…GVPI), 56-76 (WISA…GILA), 79-99 (YGGR…AYLV), 108-128 (LLLY…GIAW), 142-164 (LGVF…ALIA), 182-202 (FIPF…WFGT), 230-250 (FSLY…WLPK), 255-275 (VFGL…FPAS), 298-318 (FGII…IVLY), 329-349 (FTMG…GMGI), 368-388 (AVGG…PPLF), and 401-421 (TFFV…LTVL).

Belongs to the major facilitator superfamily. Nitrate/nitrite porter (TC 2.A.1.8) family.

The protein localises to the cell membrane. It catalyses the reaction nitrate(in) + nitrite(out) = nitrate(out) + nitrite(in). Functionally, probable nitrate/nitrite antiporter that may be involved in nitrate import and nitrite export during anaerobic growth. The polypeptide is Probable nitrate/nitrite antiporter NarK1 (Thermus thermophilus).